A 593-amino-acid chain; its full sequence is Numb-related protein 1 (593 aa).

4 disordered regions span residues 1–97 (MSAS…WQPD), 235–278 (TAQV…NSRS), 331–375 (LRQG…FGTQ), and 493–581 (MSMS…DPFD). A Phosphoserine; by PKC modification is found at Ser-17. The segment covering 27–37 (QNSLVSEQQPS) has biased composition (polar residues). Over residues 64–74 (RSLRLPKKRRD) the composition is skewed to basic residues. Position 65 is a phosphoserine; by PKC (Ser-65). In terms of domain architecture, PID spans 102 to 255 (RTGTCCFNVK…STSSTPPKDI (154 aa)). Polar residues-rich tracts occupy residues 236-251 (AQVN…SSTP), 261-278 (EDNT…NSRS), and 354-364 (SLRTVSNNPTE). The span at 493-511 (MSMSPTSPSSDPPSTSSYS) shows a compositional bias: low complexity. The span at 516–528 (SGPPPAHAPPPLP) shows a compositional bias: pro residues. A compositionally biased stretch (polar residues) spans 532-565 (AVSNGSPSIYQQQLQQANSTRNSPAGINWNSSPN).

Interacts with pkc-3. As to expression, expressed in cells comprising the intestine, pharyngeal cells, the anal sphincter and depressor muscles.

The protein localises to the cytoplasm. It is found in the cell cortex. Its subcellular location is the cytoskeleton. It localises to the membrane. Its function is as follows. Involved in the tethering and targeting of pkc-3 to modulate the intracellular distribution of the kinase. The complex formed with pkc-3 complexes are likely to be involved in assembly, maintenance, and/or regulation of protein complexes that execute asymmetric and/or polarized cell functions. The polypeptide is Numb-related protein 1 (Caenorhabditis elegans).